The chain runs to 160 residues: Eosinophil cationic protein (160 aa).

An N-terminal signal peptide occupies residues 1–27 (MVPKLFTPQICLLLLLGLMGVEGSLHA). The required for nearly all of the bactericidal activities; partially involved in LPS-binding stretch occupies residues 28–72 (RPPQFTKAQWFAIQHINVNPPRCTIAMRVINNYQRRCKNQNTFLR). H42 serves as the catalytic Proton acceptor. Cystine bridges form between C50-C110, C64-C123, C82-C138, and C89-C98. Y60 carries the 3'-nitrotyrosine modification. Position 65-69 (65-69 (KNQNT)) interacts with substrate. N-linked (GlcNAc...) asparagine glycosylation is found at N84, N92, and N119. Catalysis depends on H155, which acts as the Proton donor.

Belongs to the pancreatic ribonuclease family. As to quaternary structure, interacts with bacterial lipopolysaccharide (LPS) and lipoteichoic acid (LTA). In vitro interacts with phospholipid bilayers.

It localises to the secreted. In terms of biological role, cytotoxin and helminthotoxin with low-efficiency ribonuclease activity. Possesses a wide variety of biological activities. Exhibits antibacterial activity. The sequence is that of Eosinophil cationic protein (RNASE3) from Macaca nemestrina (Pig-tailed macaque).